Reading from the N-terminus, the 1526-residue chain is Ig-like and fibronectin type-III domain-containing protein 2 (1526 aa).

Positions 1–19 are cleaved as a signal peptide; that stretch reads MMRWRLAVLFLTLLASTTG. Residues 20 to 39 form a disordered region; that stretch reads DDTTTKASVSTTTKKGTDGP. Topologically, residues 20-1415 are extracellular; sequence DDTTTKASVS…RRSASKGSSS (1396 aa). Low complexity predominate over residues 24–33; sequence TKASVSTTTK. The Ig-like C2-type 1 domain maps to 39–170; the sequence is PHLTTDDEGF…ELLEFQVEVL (132 aa). A disulfide bridge links Cys61 with Cys154. N-linked (GlcNAc...) asparagine glycosylation is found at Asn87, Asn143, Asn158, Asn181, Asn414, Asn427, Asn475, Asn489, Asn533, Asn590, Asn617, and Asn662. The 92-residue stretch at 379 to 470 folds into the Fibronectin type-III 1 domain; it reads APRGKRDVDF…VRNIASTNVH (92 aa). The Fibronectin type-III 2 domain occupies 587 to 678; sequence APGNVTISEL…TAKLFSTLPT (92 aa). The WR1 domain maps to 682 to 724; that stretch reads PLCTIGEPIYMNDGRVMICDAVNPCPNGFRCTGAGSDLSYCCP. 7 N-linked (GlcNAc...) asparagine glycosylation sites follow: Asn754, Asn871, Asn906, Asn939, Asn979, Asn1004, and Asn1049. Fibronectin type-III domains are found at residues 827–914 and 924–1020; these read AVRN…TKPA and APEK…AQKD. The Ig-like C2-type 2 domain occupies 1116-1207; the sequence is ASVTMKKDKI…SRVEASSEVI (92 aa). The cysteines at positions 1137 and 1190 are disulfide-linked. The N-linked (GlcNAc...) asparagine glycan is linked to Asn1250. The Fibronectin type-III 5 domain maps to 1314–1406; the sequence is APSEVSNVRI…SAIPKDSEPR (93 aa). A helical membrane pass occupies residues 1416–1436; the sequence is AFWIVVILVVFGVLIAGLAVL. Residues 1437–1526 are Cytoplasmic-facing; the sequence is SKRRELPYPI…NGMRYAKLET (90 aa). The disordered stretch occupies residues 1485-1518; sequence SATTGTAAATQSEWQSANLEANSTTDNSHEYRNG. The span at 1495 to 1510 shows a compositional bias: polar residues; sequence QSEWQSANLEANSTTD.

The protein localises to the cell membrane. In Caenorhabditis elegans, this protein is Ig-like and fibronectin type-III domain-containing protein 2.